Here is a 201-residue protein sequence, read N- to C-terminus: MKQKLIKKAQELRQHGFTTGEIADELNVSMDTARWLTLQKPAEEKPEAPVDFFINWKSLGGNSTRLRYVSGALSDMALSHGEAEVILGIAVSGIPFATMMADFLEDMSGVETSLAVYHPHKHRKEKDDGEGAISTNFGSVEGKKVVIVDDVITSGKTVKEVIHAVKDHGGEPIAVTVLIDKSGLSEIEEVPIESLIKVGRL.

It belongs to the purine/pyrimidine phosphoribosyltransferase family. GfcR subfamily.

The polypeptide is Transcriptional regulator GfcR (Methanobrevibacter smithii (strain ATCC 35061 / DSM 861 / OCM 144 / PS)).